A 145-amino-acid polypeptide reads, in one-letter code: UPF0102 protein BAV3162 (145 aa).

The protein belongs to the UPF0102 family.

The protein is UPF0102 protein BAV3162 of Bordetella avium (strain 197N).